A 593-amino-acid polypeptide reads, in one-letter code: NADH-quinone oxidoreductase subunit C/D (593 aa).

The segment at Met1–Gln184 is NADH dehydrogenase I subunit C. Positions Asp208 to Arg593 are NADH dehydrogenase I subunit D.

It in the N-terminal section; belongs to the complex I 30 kDa subunit family. In the C-terminal section; belongs to the complex I 49 kDa subunit family. As to quaternary structure, NDH-1 is composed of 13 different subunits. Subunits NuoB, CD, E, F, and G constitute the peripheral sector of the complex.

Its subcellular location is the cell inner membrane. The enzyme catalyses a quinone + NADH + 5 H(+)(in) = a quinol + NAD(+) + 4 H(+)(out). Its function is as follows. NDH-1 shuttles electrons from NADH, via FMN and iron-sulfur (Fe-S) centers, to quinones in the respiratory chain. The immediate electron acceptor for the enzyme in this species is believed to be ubiquinone. Couples the redox reaction to proton translocation (for every two electrons transferred, four hydrogen ions are translocated across the cytoplasmic membrane), and thus conserves the redox energy in a proton gradient. The chain is NADH-quinone oxidoreductase subunit C/D from Azotobacter vinelandii (strain DJ / ATCC BAA-1303).